A 523-amino-acid chain; its full sequence is Glucose-1-phosphate adenylyltransferase large subunit 1, chloroplastic/amyloplastic (523 aa).

A chloroplast-targeting transit peptide spans 1 to 49; it reads MSSMQFSSVLPLEGKACVSPVRREGSACERLKIGDSSSIRHERASRRMC.

This sequence belongs to the bacterial/plant glucose-1-phosphate adenylyltransferase family. Heterotetramer. In terms of tissue distribution, starchy endosperm and roots.

The protein localises to the plastid. It localises to the chloroplast. Its subcellular location is the amyloplast. It catalyses the reaction alpha-D-glucose 1-phosphate + ATP + H(+) = ADP-alpha-D-glucose + diphosphate. The protein operates within glycan biosynthesis; starch biosynthesis. Highly active without 3'phosphoglycerate, and is only slightly affected by the activator 3'phosphoglycerate and inhibitor orthophosphate. This protein plays a role in synthesis of starch. It catalyzes the synthesis of the activated glycosyl donor, ADP-glucose from Glc-1-P and ATP. The protein is Glucose-1-phosphate adenylyltransferase large subunit 1, chloroplastic/amyloplastic of Hordeum vulgare (Barley).